Here is a 250-residue protein sequence, read N- to C-terminus: 3-deoxy-manno-octulosonate cytidylyltransferase (250 aa).

It belongs to the KdsB family.

The protein localises to the cytoplasm. The catalysed reaction is 3-deoxy-alpha-D-manno-oct-2-ulosonate + CTP = CMP-3-deoxy-beta-D-manno-octulosonate + diphosphate. Its pathway is nucleotide-sugar biosynthesis; CMP-3-deoxy-D-manno-octulosonate biosynthesis; CMP-3-deoxy-D-manno-octulosonate from 3-deoxy-D-manno-octulosonate and CTP: step 1/1. The protein operates within bacterial outer membrane biogenesis; lipopolysaccharide biosynthesis. Functionally, activates KDO (a required 8-carbon sugar) for incorporation into bacterial lipopolysaccharide in Gram-negative bacteria. The protein is 3-deoxy-manno-octulosonate cytidylyltransferase of Geobacter sulfurreducens (strain ATCC 51573 / DSM 12127 / PCA).